Here is a 631-residue protein sequence, read N- to C-terminus: 1-deoxy-D-xylulose-5-phosphate synthase (631 aa).

Residues 1-21 (MPTTFHEIPRERPLTPLLDSA) form a disordered region. Thiamine diphosphate-binding positions include His-87 and 128-130 (GHS). Asp-159 is a Mg(2+) binding site. Thiamine diphosphate contacts are provided by residues 160–161 (GA), Asn-188, Phe-295, and Glu-377. Residue Asn-188 coordinates Mg(2+).

Belongs to the transketolase family. DXPS subfamily. As to quaternary structure, homodimer. It depends on Mg(2+) as a cofactor. Thiamine diphosphate is required as a cofactor.

The catalysed reaction is D-glyceraldehyde 3-phosphate + pyruvate + H(+) = 1-deoxy-D-xylulose 5-phosphate + CO2. Its pathway is metabolic intermediate biosynthesis; 1-deoxy-D-xylulose 5-phosphate biosynthesis; 1-deoxy-D-xylulose 5-phosphate from D-glyceraldehyde 3-phosphate and pyruvate: step 1/1. In terms of biological role, catalyzes the acyloin condensation reaction between C atoms 2 and 3 of pyruvate and glyceraldehyde 3-phosphate to yield 1-deoxy-D-xylulose-5-phosphate (DXP). The polypeptide is 1-deoxy-D-xylulose-5-phosphate synthase (Ectopseudomonas mendocina (strain ymp) (Pseudomonas mendocina)).